The primary structure comprises 269 residues: 4-hydroxy-tetrahydrodipicolinate reductase (269 aa).

NAD(+) contacts are provided by residues 10 to 15 (GSSGRM) and glutamate 36. Arginine 37 is an NADP(+) binding site. NAD(+) is bound by residues 99-101 (GTT) and 123-126 (APNM). The active-site Proton donor/acceptor is the histidine 156. Histidine 157 lines the (S)-2,3,4,5-tetrahydrodipicolinate pocket. Lysine 160 acts as the Proton donor in catalysis. (S)-2,3,4,5-tetrahydrodipicolinate is bound at residue 166-167 (GT).

It belongs to the DapB family.

Its subcellular location is the cytoplasm. The catalysed reaction is (S)-2,3,4,5-tetrahydrodipicolinate + NAD(+) + H2O = (2S,4S)-4-hydroxy-2,3,4,5-tetrahydrodipicolinate + NADH + H(+). The enzyme catalyses (S)-2,3,4,5-tetrahydrodipicolinate + NADP(+) + H2O = (2S,4S)-4-hydroxy-2,3,4,5-tetrahydrodipicolinate + NADPH + H(+). Its pathway is amino-acid biosynthesis; L-lysine biosynthesis via DAP pathway; (S)-tetrahydrodipicolinate from L-aspartate: step 4/4. Functionally, catalyzes the conversion of 4-hydroxy-tetrahydrodipicolinate (HTPA) to tetrahydrodipicolinate. The chain is 4-hydroxy-tetrahydrodipicolinate reductase from Nitrosospira multiformis (strain ATCC 25196 / NCIMB 11849 / C 71).